An 898-amino-acid polypeptide reads, in one-letter code: Alanine--tRNA ligase (898 aa).

Residues His-582, His-586, Cys-685, and His-689 each coordinate Zn(2+).

This sequence belongs to the class-II aminoacyl-tRNA synthetase family. Zn(2+) is required as a cofactor.

Its subcellular location is the cytoplasm. It carries out the reaction tRNA(Ala) + L-alanine + ATP = L-alanyl-tRNA(Ala) + AMP + diphosphate. Its function is as follows. Catalyzes the attachment of alanine to tRNA(Ala) in a two-step reaction: alanine is first activated by ATP to form Ala-AMP and then transferred to the acceptor end of tRNA(Ala). Also edits incorrectly charged Ser-tRNA(Ala) and Gly-tRNA(Ala) via its editing domain. The chain is Alanine--tRNA ligase from Mycolicibacterium gilvum (strain PYR-GCK) (Mycobacterium gilvum (strain PYR-GCK)).